Consider the following 709-residue polypeptide: Solute carrier family 15 member 1 (709 aa).

Residues 1-21 (MGMSKSRGCFGYPLSIFFIVV) traverse the membrane as a helical segment. At 22-53 (NEFCERFSYYGMRALLVLYFRNFLGWDDNLST) the chain is on the extracellular side. An N-linked (GlcNAc...) asparagine glycan is attached at Asn50. Residues 54-74 (AIYHTFVALCYLTPILGALIA) form a helical membrane-spanning segment. The Cytoplasmic segment spans residues 75–82 (DSWLGKFK). Residues 83 to 103 (TIVSLSIVYTIGQAVISVSSI) traverse the membrane as a helical segment. Topologically, residues 104-118 (NDLTDHDHNGSPDSL) are extracellular. Residues 119–139 (PVHVALSMVGLALIALGTGGI) traverse the membrane as a helical segment. At 140-161 (KPCVSAFGGDQFEEGQEKQRNR) the chain is on the cytoplasmic side. Residues 162–182 (FFSIFYLAINGGSLLSTIITP) form a helical membrane-spanning segment. Over 183 to 198 (ILRVQQCGIHSQQACY) the chain is Extracellular. The helical transmembrane segment at 199–219 (PLAFGVPAALMAVALIVFVLG) threads the bilayer. At 220 to 276 (SGMYKKFQPQGNIMGKVAKCIGFAIKNRFRHRSKAYPKREHWLDWAKEKYDERLISQ) the chain is on the cytoplasmic side. Residues 277–297 (IKMVTKVMFLYIPLPMFWALF) traverse the membrane as a helical segment. The Extracellular portion of the chain corresponds to 298 to 327 (DQQGSRWTLQATTMNGKIGAIEIQPDQMQT). The chain crosses the membrane as a helical span at residues 328-348 (VNAILIVIMVPIVDAVVYPLI). Over 349 to 361 (AKCGFNFTSLKKM) the chain is Cytoplasmic. The chain crosses the membrane as a helical span at residues 362-382 (TVGMFLASMAFVVAAIVQVEI). The Extracellular portion of the chain corresponds to 383-585 (DKTLPVFPGG…PPNTVNMALQ (203 aa)). Positions 383-585 (DKTLPVFPGG…PPNTVNMALQ (203 aa)) are extracellular domain (ECD). N-linked (GlcNAc...) asparagine glycosylation is found at Asn406, Asn439, Asn515, and Asn532. A helical transmembrane segment spans residues 586–606 (IPQYFLLTCGEVVFSVTGLEF). The Cytoplasmic portion of the chain corresponds to 607–620 (SYSQAPSNMKSVLQ). The helical transmembrane segment at 621–641 (AGWLLTVAVGNIIVLIVAGAG) threads the bilayer. Over 642 to 646 (HFPKQ) the chain is Extracellular. The helical transmembrane segment at 647-667 (WAEYILFASLLLVVCVIFAIM) threads the bilayer. At 668-709 (ARFYTYINPAEIEAQFDEDEKKKGIGKENPYSSLEPVSQTNM) the chain is on the cytoplasmic side. Residues 690-709 (KGIGKENPYSSLEPVSQTNM) are disordered. Positions 697–709 (PYSSLEPVSQTNM) are enriched in polar residues.

Belongs to the major facilitator superfamily. Proton-dependent oligopeptide transporter (POT/PTR) (TC 2.A.17) family. Interacts (via extracellular domain region) with trypsin.

The protein resides in the apical cell membrane. It catalyses the reaction a dipeptide(out) + H(+)(out) = a dipeptide(in) + H(+)(in). The enzyme catalyses an L-amino acid tripeptide(out) + H(+)(out) = an L-amino acid tripeptide(in) + H(+)(in). It carries out the reaction L-alanyl-L-lysine(out) + H(+)(out) = L-alanyl-L-lysine(in) + H(+)(in). The catalysed reaction is L-alanyl-L-proline(out) + H(+)(out) = L-alanyl-L-proline(in) + H(+)(in). It catalyses the reaction L-alanyl-L-valine(out) + H(+)(out) = L-alanyl-L-valine(in) + H(+)(in). The enzyme catalyses carnosine(out) + H(+)(out) = carnosine(in) + H(+)(in). It carries out the reaction glycyl-L-glutamine(out) + H(+)(out) = glycyl-L-glutamine(in) + H(+)(in). The catalysed reaction is glycyl-L-leucine(out) + H(+)(out) = glycyl-L-leucine(in) + H(+)(in). It catalyses the reaction glycyl-L-proline(out) + H(+)(out) = glycyl-L-proline(in) + H(+)(in). The enzyme catalyses glycyl-sarcosine(out) + H(+)(out) = glycyl-sarcosine(in) + H(+)(in). It carries out the reaction L-leucyl-L-leucine(out) + H(+)(out) = L-leucyl-L-leucine(in) + H(+)(in). The catalysed reaction is L-leucyl-L-proline(out) + H(+)(out) = L-leucyl-L-proline(in) + H(+)(in). It catalyses the reaction L-phenylalanyl-L-leucine(out) + H(+)(out) = L-phenylalanyl-L-leucine(in) + H(+)(in). The enzyme catalyses L-phenylalanyl-L-phenylalanine(out) + H(+)(out) = L-phenylalanyl-L-phenylalanine(in) + H(+)(in). It carries out the reaction L-lysyl-glycine(out) + H(+)(out) = L-lysyl-glycine(in) + H(+)(in). The catalysed reaction is L-tyrosylglycine(out) + H(+)(out) = L-tyrosylglycine(in) + H(+)(in). It catalyses the reaction L-alanyl-L-aspartate(out) + 2 H(+)(out) = L-alanyl-L-aspartate(in) + 2 H(+)(in). The enzyme catalyses L-aspartyl-glycine(out) + 2 H(+)(out) = L-aspartyl-glycine(in) + 2 H(+)(in). It carries out the reaction glycyl-L-aspartate(out) + 2 H(+)(out) = glycyl-L-aspartate(in) + 2 H(+)(in). The catalysed reaction is glycyl-L-glutamate(out) + 2 H(+)(out) = glycyl-L-glutamate(in) + 2 H(+)(in). It catalyses the reaction L-alanyl-L-leucyl-L-alanine(out) + H(+)(out) = L-alanyl-L-leucyl-L-alanine(in) + H(+)(in). The enzyme catalyses L-alanyl-L-prolylglycine(out) + H(+)(out) = L-alanyl-L-prolylglycine(in) + H(+)(in). It carries out the reaction glycylglycyl-L-isoleucine(out) + H(+)(out) = glycylglycyl-L-isoleucine(in) + H(+)(in). The catalysed reaction is glycylglycyl-L-proline(out) + H(+)(out) = glycylglycyl-L-proline(in) + H(+)(in). It catalyses the reaction L-methionyl-L-phenylalanyl-L-methionine(out) + H(+)(out) = L-methionyl-L-phenylalanyl-L-methionine(in) + H(+)(in). The enzyme catalyses N-acetyl-D-muramoyl-L-alanyl-D-isoglutamine(out) + 2 H(+)(out) = N-acetyl-D-muramoyl-L-alanyl-D-isoglutamine(in) + 2 H(+)(in). It carries out the reaction N(alpha)-formyl-L-methionyl-L-leucyl-L-phenylalanine(out) + 2 H(+)(out) = N(alpha)-formyl-L-methionyl-L-leucyl-L-phenylalanine(in) + 2 H(+)(in). Its function is as follows. Electrogenic proton-coupled amino-acid transporter that transports oligopeptides of 2 to 4 amino acids with a preference for dipeptides. Transports neutral and monovalently charged peptides with a proton to peptide stoichiometry of 1:1 or 2:1. Primarily responsible for the absorption of dietary di- and tripeptides from the small intestinal lumen. Mediates transepithelial transport of muramyl and N-formylated bacterial dipeptides contributing to recognition of pathogenic bacteria by the mucosal immune system. This chain is Solute carrier family 15 member 1, found in Mus musculus (Mouse).